We begin with the raw amino-acid sequence, 149 residues long: Arginine repressor (149 aa).

Belongs to the ArgR family.

The protein localises to the cytoplasm. Its pathway is amino-acid biosynthesis; L-arginine biosynthesis [regulation]. In terms of biological role, regulates arginine biosynthesis genes. This is Arginine repressor from Geobacillus thermodenitrificans (strain NG80-2).